The chain runs to 677 residues: Amine oxidase [copper-containing] alpha 2, peroxisomal (677 aa).

Position 320 to 331 (320 to 331 (YLDCGEFGCGQT)) interacts with substrate. The active-site Proton acceptor is D322. C341 and C367 are joined by a disulfide. Residue 407–412 (VGNYDY) coordinates substrate. Y410 serves as the catalytic Schiff-base intermediate with substrate; via topaquinone. A 2',4',5'-topaquinone modification is found at Y410. Cu cation-binding residues include H466 and H468. 3 residues coordinate Mn(2+): D477, D617, and I618. H628 contributes to the Cu cation binding site.

It belongs to the copper/topaquinone oxidase family. In terms of assembly, homodimer. It depends on Cu cation as a cofactor. Zn(2+) is required as a cofactor. L-topaquinone serves as cofactor. In terms of processing, topaquinone (TPQ) is generated by copper-dependent autoxidation of a specific tyrosyl residue. In terms of tissue distribution, expressed exclusively in leaves.

It is found in the peroxisome. The enzyme catalyses a primary methyl amine + O2 + H2O = an aldehyde + H2O2 + NH4(+). The protein operates within amine and polyamine degradation; putrescine degradation. Functionally, copper amine oxidase that can use putrescine and spermidine as substrates. Involved in putrescine catabolism in peroxisomes in response to salt stress. Regulates arginine-dependent nitric oxide (NO) production, a key signaling molecule regulating a wide range of physiological processes including responses to salt stress, by influencing arginine bioavailability. Modulates primary root growth. The sequence is that of Amine oxidase [copper-containing] alpha 2, peroxisomal from Arabidopsis thaliana (Mouse-ear cress).